The chain runs to 2820 residues: Neurofibromin (2820 aa).

A2 bears the N-acetylalanine mark. Phosphoserine occurs at positions 866 and 878. In terms of domain architecture, Ras-GAP spans 1253-1463; it reads HLLYQLLWNM…DLARRFFLDI (211 aa). The 159-residue stretch at 1561–1719 folds into the CRAL-TRIO domain; sequence EKEEFKALKT…ATLALEEDLK (159 aa). The tract at residues 1561–1818 is lipid binding; the sequence is EKEEFKALKT…RTRWELSQPD (258 aa). Residues S2169 and S2448 each carry the phosphoserine modification. Residues 2457-2482 form a disordered region; it reads YPIHHGDPSSRTLKETQPWSSPRGSE. Positions 2458–2470 are enriched in basic and acidic residues; the sequence is PIHHGDPSSRTLK. T2495 is modified (phosphothreonine). A phosphoserine mark is found at S2496, S2502, S2504, and S2524. Positions 2536 to 2552 match the Bipartite nuclear localization signal motif; that stretch reads KRQEMESGITTPPKMRR. At T2546 the chain carries Phosphothreonine. Phosphoserine is present on residues S2578, S2783, and S2798. Residues 2768-2820 are disordered; that stretch reads TSQHSPGIDKENVELSPTTGHCNSGRTRHGSASQVQKQRSAGSFKRNSIKKIV. The span at 2782 to 2808 shows a compositional bias: polar residues; that stretch reads LSPTTGHCNSGRTRHGSASQVQKQRSA.

Interacts with HTR6. Interacts with SPRED2. In terms of processing, ubiquitinated by RNF7/RBX2, leading to its degradation.

It localises to the nucleus. The protein localises to the nucleolus. Its subcellular location is the cell membrane. Functionally, stimulates the GTPase activity of Ras. NF1 shows greater affinity for Ras GAP, but lower specific activity. May be a regulator of Ras activity. In Rattus norvegicus (Rat), this protein is Neurofibromin (Nf1).